The primary structure comprises 102 residues: uncharacterized protein (102 aa).

Residues 27-47 (TISLVSAGLLEEIFLLFGLTF) traverse the membrane as a helical segment.

It localises to the membrane. This is an uncharacterized protein from Saccharomyces cerevisiae (strain ATCC 204508 / S288c) (Baker's yeast).